Here is a 725-residue protein sequence, read N- to C-terminus: Golgin candidate 4 (725 aa).

The interval 17–62 is disordered; that stretch reads HDVHDDDEDDDEDLTIYGSTNGGTDRRNSNGFRYSRSPMANGFESP. The span at 21-30 shows a compositional bias: acidic residues; it reads DDDEDDDEDL. Residues 66-132 are a coiled coil; the sequence is EIERYKAEIN…LKESRLDLSR (67 aa). 3 disordered regions span residues 134–183, 191–210, and 311–349; these read SNNN…SHKK, LEERTRSMASAQARELEKER, and ASQKSTSRKLFPKSTEDLSRHLSSLDEEKAGTFPGKEDM. Residues 148 to 175 show a composition bias toward polar residues; the sequence is NRSQRSPTNWKNRNQMNNGIASKPNGTE. 3 coiled-coil regions span residues 191–316, 344–407, and 437–563; these read LEER…QKST, PGKE…QTNE, and EIRK…LNRM. A compositionally biased stretch (basic and acidic residues) spans 324 to 349; it reads STEDLSRHLSSLDEEKAGTFPGKEDM. The GRIP domain maps to 562–613; it reads RMSMDSDFLVDRRIVIKLLVTYFQRNHSREVLDLMVRMLGFSEEEKQRIGLA. The segment covering 672-688 has biased composition (basic and acidic residues); the sequence is ERERREAEDAANKEQEK. The segment at 672 to 725 is disordered; it reads ERERREAEDAANKEQEKATVSSTQRPKYEQSDSEFSTVPLTSSNSNHRLSRLLT. The span at 711-725 shows a compositional bias: low complexity; sequence LTSSNSNHRLSRLLT.

The protein localises to the golgi apparatus. In terms of biological role, golgi matrix protein playing a role in tethering of vesicles to Golgi membranes and in maintaining the overall structure of the Golgi apparatus. This is Golgin candidate 4 (GC4) from Arabidopsis thaliana (Mouse-ear cress).